The primary structure comprises 264 residues: Orotidine 5'-phosphate decarboxylase (264 aa).

Substrate is bound by residues Asp-40, 62–64 (KTH), 93–102 (DRKFADIGNT), Tyr-214, and Arg-233. Catalysis depends on Lys-95, which acts as the Proton donor.

It belongs to the OMP decarboxylase family.

It catalyses the reaction orotidine 5'-phosphate + H(+) = UMP + CO2. The protein operates within pyrimidine metabolism; UMP biosynthesis via de novo pathway; UMP from orotate: step 2/2. In Schizosaccharomyces pombe (strain 972 / ATCC 24843) (Fission yeast), this protein is Orotidine 5'-phosphate decarboxylase (ura4).